The primary structure comprises 224 residues: UPF0758 protein Lm4b_01560 (224 aa).

An MPN domain is found at 102–224 (VVRCPEDAVK…YISLKEKGYF (123 aa)). Zn(2+) contacts are provided by histidine 173, histidine 175, and aspartate 186. Residues 173-186 (HNHPSGDPTPSSED) carry the JAMM motif motif.

The protein belongs to the UPF0758 family.

The protein is UPF0758 protein Lm4b_01560 of Listeria monocytogenes serotype 4b (strain CLIP80459).